The chain runs to 371 residues: Beta-1,3-galactosyltransferase 4 (371 aa).

Over 1–4 (MPLS) the chain is Cytoplasmic. A helical; Signal-anchor for type II membrane protein membrane pass occupies residues 5–25 (LFRRVLLAVLLLVIIWTLFGP). Residues 26-371 (SGLGEELLSL…RCRFIAWFSS (346 aa)) are Lumenal-facing. N143 carries an N-linked (GlcNAc...) asparagine glycan.

The protein belongs to the glycosyltransferase 31 family. As to expression, expressed in heart, brain, spleen, kidney, lung and testis.

It is found in the golgi apparatus membrane. It carries out the reaction a ganglioside GM2 (d18:1(4E)) + UDP-alpha-D-galactose = a ganglioside GM1 (d18:1(4E)) + UDP + H(+). It catalyses the reaction a ganglioside GM2 + UDP-alpha-D-galactose = a ganglioside GM1 + UDP + H(+). The enzyme catalyses a ganglioside GD2 (d18:1(4E)) + UDP-alpha-D-galactose = a ganglioside GD1b (d18:1(4E)) + UDP + H(+). The catalysed reaction is a ganglioside GA2 (d18:1(4E)) + UDP-alpha-D-galactose = a ganglioside GA1 (d18:1(4E)) + UDP + H(+). Its pathway is protein modification; protein glycosylation. Its function is as follows. Involved in GM1/GD1B/GA1 ganglioside biosynthesis. This is Beta-1,3-galactosyltransferase 4 from Mus musculus (Mouse).